The chain runs to 313 residues: Olfactory receptor 4M1 (313 aa).

Topologically, residues 1–25 (METANYTKVTEFVLTGLSQTREVQL) are extracellular. A glycan (N-linked (GlcNAc...) asparagine) is linked at Asn-5. The helical transmembrane segment at 26–49 (VLFVIFLSFYLFILPGNILIICTI) threads the bilayer. The Cytoplasmic segment spans residues 50 to 57 (RLDPHLTS). A helical transmembrane segment spans residues 58 to 79 (PMYFLLANLALLDIWYSSITAP). The Extracellular segment spans residues 80-100 (KMLIDFFVERKIISFGGCIAQ). The cysteines at positions 97 and 189 are disulfide-linked. Residues 101 to 120 (LFFLHFVGASEMFLLTVMAY) traverse the membrane as a helical segment. Residues 121-139 (DRYAAICRPLHYATIMNRR) are Cytoplasmic-facing. A helical membrane pass occupies residues 140 to 158 (LCCILVALSWMGGFIHSII). Residues 159-195 (QVALIVRLPFCGPNELDSYFCDITQVVRIACANTFPE) lie on the Extracellular side of the membrane. Residues 196 to 219 (ELVMICSSGLISVVCFIALLMSYA) traverse the membrane as a helical segment. The Cytoplasmic portion of the chain corresponds to 220-237 (FLLALLKKHSGSGENTNR). Residues 238 to 260 (AMSTCYSHITIVVLMFGPSIYIY) form a helical membrane-spanning segment. Residues 261-271 (ARPFDSFSLDK) are Extracellular-facing. A helical transmembrane segment spans residues 272 to 291 (VVSVFHTVIFPLLNPIIYTL). At 292 to 313 (RNKEVKAAMRKVVTKYILCEEK) the chain is on the cytoplasmic side.

Belongs to the G-protein coupled receptor 1 family. In terms of tissue distribution, highly expressed in the testis and olfactory bulb.

It is found in the cell membrane. In terms of biological role, olfactory receptor that acts as a receptor of Asprosin hormone, potentially at the surface of hepatocytes and may help to promote hepatocyte glucose release. The sequence is that of Olfactory receptor 4M1 from Homo sapiens (Human).